Reading from the N-terminus, the 249-residue chain is Microvitellogenin (249 aa).

Residues 1-17 form the signal peptide; it reads MLRTTVVLLTLAAIAFA.

Its function is as follows. Small vitellogenic protein found in females. It is synthesized in the fat body, secreted into the hemolymph, and taken up by developing oocytes. This Manduca sexta (Tobacco hawkmoth) protein is Microvitellogenin (MVG).